The chain runs to 297 residues: 4-hydroxy-tetrahydrodipicolinate synthase (297 aa).

Residue T55 participates in pyruvate binding. Residue Y144 is the Proton donor/acceptor of the active site. The active-site Schiff-base intermediate with substrate is K172. I213 provides a ligand contact to pyruvate.

The protein belongs to the DapA family. As to quaternary structure, homotetramer; dimer of dimers.

Its subcellular location is the cytoplasm. The enzyme catalyses L-aspartate 4-semialdehyde + pyruvate = (2S,4S)-4-hydroxy-2,3,4,5-tetrahydrodipicolinate + H2O + H(+). The protein operates within amino-acid biosynthesis; L-lysine biosynthesis via DAP pathway; (S)-tetrahydrodipicolinate from L-aspartate: step 3/4. Functionally, catalyzes the condensation of (S)-aspartate-beta-semialdehyde [(S)-ASA] and pyruvate to 4-hydroxy-tetrahydrodipicolinate (HTPA). This chain is 4-hydroxy-tetrahydrodipicolinate synthase, found in Lactococcus lactis subsp. cremoris (strain MG1363).